The following is a 267-amino-acid chain: Neutrophil elastase (267 aa).

Positions M1–A27 are cleaved as a signal peptide. The propeptide occupies S28–E29. In terms of domain architecture, Peptidase S1 spans I30–Q247. C55 and C71 are joined by a disulfide. The Charge relay system role is filled by H70. An N-linked (GlcNAc...) asparagine glycan is attached at N88. D117 acts as the Charge relay system in catalysis. 2 N-linked (GlcNAc...) asparagine glycosylation sites follow: N124 and N173. Disulfide bonds link C151/C208, C181/C187, and C198/C223. S202 serves as the catalytic Charge relay system.

It belongs to the peptidase S1 family. Elastase subfamily. As to quaternary structure, interacts with NOTCH2NL. Interacts with agaphelin, an antihemostatic protein from Anopheles gambiae. As to expression, bone marrow cells. Neutrophil.

Its subcellular location is the cytoplasmic vesicle. It localises to the phagosome. The enzyme catalyses Hydrolysis of proteins, including elastin. Preferential cleavage: Val-|-Xaa &gt; Ala-|-Xaa.. Serine protease that modifies the functions of natural killer cells, monocytes and granulocytes. Inhibits C5a-dependent neutrophil enzyme release and chemotaxis. Promotes cleavage of GSDMB, thereby inhibiting pyroptosis. Promotes blood coagulation. Through the activation of the platelet fibrinogen receptor integrin alpha-IIb/beta-3, potentiates platelet aggregation induced by a threshold concentration of cathepsin G (CTSG). Cleaves and thus inactivates tissue factor pathway inhibitor (TFPI). Capable of killing E.coli but not S.aureus in vitro; digests outer membrane protein A (ompA) in E.coli and K.pneumoniae. The polypeptide is Neutrophil elastase (ELANE) (Homo sapiens (Human)).